We begin with the raw amino-acid sequence, 290 residues long: Shikimate dehydrogenase (NADP(+)) (290 aa).

Shikimate is bound by residues 20 to 22 (SLS) and threonine 67. Lysine 71 functions as the Proton acceptor in the catalytic mechanism. Shikimate contacts are provided by asparagine 92 and aspartate 107. NADP(+)-binding positions include 132–136 (GAGGA) and methionine 228. A shikimate-binding site is contributed by tyrosine 230. Glycine 251 contributes to the NADP(+) binding site.

This sequence belongs to the shikimate dehydrogenase family. As to quaternary structure, homodimer.

It carries out the reaction shikimate + NADP(+) = 3-dehydroshikimate + NADPH + H(+). It participates in metabolic intermediate biosynthesis; chorismate biosynthesis; chorismate from D-erythrose 4-phosphate and phosphoenolpyruvate: step 4/7. Its function is as follows. Involved in the biosynthesis of the chorismate, which leads to the biosynthesis of aromatic amino acids. Catalyzes the reversible NADPH linked reduction of 3-dehydroshikimate (DHSA) to yield shikimate (SA). This chain is Shikimate dehydrogenase (NADP(+)), found in Geobacter sp. (strain M21).